A 707-amino-acid polypeptide reads, in one-letter code: Golgin candidate 1 (707 aa).

The Cytoplasmic segment spans residues 1 to 664 (MASWLKAAED…RATRFLWRYP (664 aa)). Disordered stretches follow at residues 22–106 (VVED…EIHP), 121–196 (VADT…SKRD), and 234–256 (QEPKVPVTSTNLKREQDRRADTT). The span at 38-47 (SGRKGSQGKR) shows a compositional bias: low complexity. A compositionally biased stretch (basic and acidic residues) spans 56–67 (VKEESSNKRDSS). Residues 68 to 80 (GDQSGPGVSQSEV) are compositionally biased toward polar residues. Positions 83-95 (SKSSVSTDETSSS) are enriched in low complexity. Basic and acidic residues-rich tracts occupy residues 139-150 (DGDRSESKHADG), 185-196 (TQRELDDSSKRD), and 245-254 (LKREQDRRAD). 2 coiled-coil regions span residues 287–424 (RVCA…NATK) and 452–608 (ADER…KSRV). Residues 665–685 (IARMFLLFYLVFVHLFLMYLI) traverse the membrane as a helical; Signal-anchor for type II membrane protein segment. Topologically, residues 686-707 (HRLQEQAEAQEVAAMTNNVFRL) are lumenal.

It is found in the golgi apparatus membrane. In terms of biological role, golgi matrix protein playing a role in tethering of vesicles to Golgi membranes and in maintaining the overall structure of the Golgi apparatus. The chain is Golgin candidate 1 (GC1) from Arabidopsis thaliana (Mouse-ear cress).